The chain runs to 356 residues: MKIKVLIVDDSALIRGVMREIINSQPDMEVVGVAPDPIAARELIKQTNPDVLTLDVEMPKMDGLEFLEKLMRLRPMPVVMVSSLTERGSEITMRALELGAVDFVTKPKMSIQSGMLEYTDLIADKIRIAARARIKPRTPHAQGGQSGTTLAAVRNPLTSSEKLIIIGASTGGTEAIKDFLMQLPPDSPGVLITQHMPEGFTRSFANRLDKLCKISVKEAEGGERVLPGHAYLAPGHSHLLLVRSGANYMTKLDQGPPVNRHRPSVDVLFNSAALTAGKNAVGVILTGMGKDGAAGMLEMKKAGGYNLAQDEASCVVFGMPKEAIAVGATHEVAPLHELPRRVLEFFAAHGERAMRV.

Residues Lys-4 to Leu-121 enclose the Response regulatory domain. The residue at position 55 (Asp-55) is a 4-aspartylphosphate. Residues Pro-156–His-349 form the CheB-type methylesterase domain. Active-site residues include Ser-169, His-195, and Asp-291.

The protein belongs to the CheB family. Post-translationally, phosphorylated by CheA. Phosphorylation of the N-terminal regulatory domain activates the methylesterase activity.

The protein resides in the cytoplasm. The enzyme catalyses [protein]-L-glutamate 5-O-methyl ester + H2O = L-glutamyl-[protein] + methanol + H(+). The catalysed reaction is L-glutaminyl-[protein] + H2O = L-glutamyl-[protein] + NH4(+). Functionally, involved in chemotaxis. Part of a chemotaxis signal transduction system that modulates chemotaxis in response to various stimuli. Catalyzes the demethylation of specific methylglutamate residues introduced into the chemoreceptors (methyl-accepting chemotaxis proteins or MCP) by CheR. Also mediates the irreversible deamidation of specific glutamine residues to glutamic acid. This chain is Protein-glutamate methylesterase/protein-glutamine glutaminase, found in Thiobacillus denitrificans (strain ATCC 25259 / T1).